We begin with the raw amino-acid sequence, 163 residues long: Peptidyl-prolyl cis-trans isomerase (163 aa).

Residues 5 to 162 form the PPIase cyclophilin-type domain; the sequence is YFDVSSNGKP…SVLKIEDCGT (158 aa).

Belongs to the cyclophilin-type PPIase family. PPIase A subfamily.

It is found in the cytoplasm. The catalysed reaction is [protein]-peptidylproline (omega=180) = [protein]-peptidylproline (omega=0). Binds cyclosporin A (CsA). CsA mediates some of its effects via an inhibitory action on PPIase. Functionally, PPIases accelerate the folding of proteins. It catalyzes the cis-trans isomerization of proline imidic peptide bonds in oligopeptides. This is Peptidyl-prolyl cis-trans isomerase (PIG28) from Uromyces fabae (Rust fungus).